A 286-amino-acid chain; its full sequence is Ribosomal RNA small subunit methyltransferase A (286 aa).

S-adenosyl-L-methionine-binding residues include asparagine 28, leucine 30, glycine 55, glutamate 77, aspartate 103, and asparagine 123.

The protein belongs to the class I-like SAM-binding methyltransferase superfamily. rRNA adenine N(6)-methyltransferase family. RsmA subfamily.

It localises to the cytoplasm. The enzyme catalyses adenosine(1518)/adenosine(1519) in 16S rRNA + 4 S-adenosyl-L-methionine = N(6)-dimethyladenosine(1518)/N(6)-dimethyladenosine(1519) in 16S rRNA + 4 S-adenosyl-L-homocysteine + 4 H(+). Its function is as follows. Specifically dimethylates two adjacent adenosines (A1518 and A1519) in the loop of a conserved hairpin near the 3'-end of 16S rRNA in the 30S particle. May play a critical role in biogenesis of 30S subunits. This chain is Ribosomal RNA small subunit methyltransferase A, found in Rhodopseudomonas palustris (strain BisB18).